A 436-amino-acid polypeptide reads, in one-letter code: uncharacterized protein (436 aa).

Residues 1–18 (MMKRFVALSMAIFSLSFA) form the signal peptide.

This is an uncharacterized protein from Aquifex aeolicus (strain VF5).